A 254-amino-acid chain; its full sequence is 4-hydroxy-tetrahydrodipicolinate reductase (254 aa).

7–12 (GASGRI) is an NAD(+) binding site. Arginine 35 lines the NADP(+) pocket. NAD(+)-binding positions include 91 to 93 (GTT) and 115 to 118 (AHNM). Histidine 147 functions as the Proton donor/acceptor in the catalytic mechanism. A (S)-2,3,4,5-tetrahydrodipicolinate-binding site is contributed by histidine 148. Lysine 151 acts as the Proton donor in catalysis. 157–158 (GT) lines the (S)-2,3,4,5-tetrahydrodipicolinate pocket.

It belongs to the DapB family.

Its subcellular location is the cytoplasm. The enzyme catalyses (S)-2,3,4,5-tetrahydrodipicolinate + NAD(+) + H2O = (2S,4S)-4-hydroxy-2,3,4,5-tetrahydrodipicolinate + NADH + H(+). It catalyses the reaction (S)-2,3,4,5-tetrahydrodipicolinate + NADP(+) + H2O = (2S,4S)-4-hydroxy-2,3,4,5-tetrahydrodipicolinate + NADPH + H(+). It functions in the pathway amino-acid biosynthesis; L-lysine biosynthesis via DAP pathway; (S)-tetrahydrodipicolinate from L-aspartate: step 4/4. In terms of biological role, catalyzes the conversion of 4-hydroxy-tetrahydrodipicolinate (HTPA) to tetrahydrodipicolinate. The polypeptide is 4-hydroxy-tetrahydrodipicolinate reductase (Helicobacter acinonychis (strain Sheeba)).